A 320-amino-acid chain; its full sequence is 3-oxoacyl-[acyl-carrier-protein] reductase 1, chloroplastic (320 aa).

The N-terminal 60 residues, 1-60, are a transit peptide targeting the chloroplast; it reads MATTVAATKLTSLKAVKKLGFREIRQVRQWSPLQSAMPHFGMLRCGSRQSFATSTVVKAQ. NADP(+) is bound at residue 82 to 106; that stretch reads VTGASRGIGKAIALSLGKAGCKVLV. S214 serves as a coordination point for substrate. Y227 acts as the Proton acceptor in catalysis.

The protein belongs to the short-chain dehydrogenases/reductases (SDR) family. In terms of assembly, homotetramer.

The protein resides in the plastid. It localises to the chloroplast. The enzyme catalyses a (3R)-hydroxyacyl-[ACP] + NADP(+) = a 3-oxoacyl-[ACP] + NADPH + H(+). It functions in the pathway lipid metabolism; fatty acid biosynthesis. The protein is 3-oxoacyl-[acyl-carrier-protein] reductase 1, chloroplastic (gbkr1) of Brassica napus (Rape).